Reading from the N-terminus, the 906-residue chain is Protein translocase subunit SecA (906 aa).

ATP-binding positions include Q90, 108–112 (GEGKT), and D503. The tract at residues 845 to 882 (TAAEAPASVPQPQAAVAPQPAPELVGADNGESQPQAWG) is disordered. The span at 846–862 (AAEAPASVPQPQAAVAP) shows a compositional bias: low complexity. Residues C890, C892, C901, and H902 each coordinate Zn(2+).

Belongs to the SecA family. As to quaternary structure, monomer and homodimer. Part of the essential Sec protein translocation apparatus which comprises SecA, SecYEG and auxiliary proteins SecDF-YajC and YidC. The cofactor is Zn(2+).

It localises to the cell inner membrane. The protein resides in the cytoplasm. The catalysed reaction is ATP + H2O + cellular proteinSide 1 = ADP + phosphate + cellular proteinSide 2.. Functionally, part of the Sec protein translocase complex. Interacts with the SecYEG preprotein conducting channel. Has a central role in coupling the hydrolysis of ATP to the transfer of proteins into and across the cell membrane, serving both as a receptor for the preprotein-SecB complex and as an ATP-driven molecular motor driving the stepwise translocation of polypeptide chains across the membrane. The chain is Protein translocase subunit SecA from Cereibacter sphaeroides (strain ATCC 17025 / ATH 2.4.3) (Rhodobacter sphaeroides).